The following is a 160-amino-acid chain: Small ribosomal subunit protein uS7 (160 aa).

Belongs to the universal ribosomal protein uS7 family. As to quaternary structure, part of the 30S ribosomal subunit. Contacts proteins S9 and S11.

In terms of biological role, one of the primary rRNA binding proteins, it binds directly to 16S rRNA where it nucleates assembly of the head domain of the 30S subunit. Is located at the subunit interface close to the decoding center, probably blocks exit of the E-site tRNA. This is Small ribosomal subunit protein uS7 from Rickettsia massiliae (strain Mtu5).